A 725-amino-acid polypeptide reads, in one-letter code: mRNA decay activator protein ZFP36L3 (725 aa).

The span at 1-25 (MANNNLNRPLNTNVADSSNSSSTPG) shows a compositional bias: low complexity. Residues 1–119 (MANNNLNRPL…KVSGSSSLAT (119 aa)) form a disordered region. Polar residues-rich tracts occupy residues 42 to 72 (APSS…QSGA) and 100 to 119 (HSLQ…SLAT). 2 consecutive C3H1-type zinc fingers follow at residues 122-150 (RYKT…HGYR) and 160-188 (KYKT…HNQP). Residues 193 to 711 (VLSESTLEEP…ESEFDNTNSS (519 aa)) form a necessary for cytoplasmic localization region. Residues 276–310 (STTAHDADKDPDKDADKDPSNNSANDALAFPQEPG) form a disordered region. The segment covering 280 to 294 (HDADKDPDKDADKDP) has biased composition (basic and acidic residues). 4 helical membrane passes run 380–400 (LAPA…AMAL), 420–440 (AALA…GAAM), 441–461 (APGA…MATG), and 468–488 (AAMA…GAAV). The segment at 686 to 709 (DEDDFLRRSSSSSSLNESEFDNTN) is disordered. Low complexity predominate over residues 693–702 (RSSSSSSLNE).

Expressed in placenta and extraembryonic tissues (at protein level). Not detected in embryos and fetus.

It localises to the cytoplasm. It is found in the membrane. Placenta-specific zinc-finger RNA-binding protein that destabilizes cytoplasmic AU-rich element (ARE)-containing mRNA transcripts by promoting their poly(A) tail removal or deadenylation, and hence provide a mechanism for attenuating protein synthesis. Binds to the 3'-UTR ARE of placental target mRNAs, such as TNF, HBEGF and LIPG. Involved in placental expression of many genes important for normal placental physiology. This is mRNA decay activator protein ZFP36L3 from Mus musculus (Mouse).